Reading from the N-terminus, the 308-residue chain is Elongation factor Ts (308 aa).

An involved in Mg(2+) ion dislocation from EF-Tu region spans residues 80 to 83; that stretch reads TDFV.

The protein belongs to the EF-Ts family.

The protein localises to the cytoplasm. Associates with the EF-Tu.GDP complex and induces the exchange of GDP to GTP. It remains bound to the aminoacyl-tRNA.EF-Tu.GTP complex up to the GTP hydrolysis stage on the ribosome. The sequence is that of Elongation factor Ts from Agrobacterium fabrum (strain C58 / ATCC 33970) (Agrobacterium tumefaciens (strain C58)).